Reading from the N-terminus, the 496-residue chain is Iroquois-class homeodomain protein irx-4 (496 aa).

Residues 141–203 constitute a DNA-binding region (homeobox; TALE-type); the sequence is GSTRRKNATR…NARRRLKKEN (63 aa). The disordered stretch occupies residues 203 to 236; sequence NKMTWPPRNKCSDEKRPYDEEEEEEEEEDSQKAT. Residues 221–231 show a composition bias toward acidic residues; that stretch reads DEEEEEEEEED.

The protein belongs to the TALE/IRO homeobox family. Expressed in the neural plate in overlapping patterns with other irx members, which all share an anterior border of expression. Broadly expressed in the tailbud rhombencephalon (hindbrain). Outside the nervous system and at tailbud stages, expressed in the developing otic vesicle, branchial arches and prospective heart region.

It localises to the nucleus. Its function is as follows. Acts partially redundantly with other irx members in neural patterning. Required for formation of the posterior forebrain, midbrain, hindbrain, and to a lesser extent, spinal cord. Patterns the neuroectoderm in both the anterior/posterior and dorsal/ventral axes. Does not appear to play a role in pronephros kidney development. This Xenopus tropicalis (Western clawed frog) protein is Iroquois-class homeodomain protein irx-4.